The primary structure comprises 386 residues: GTPase Obg (386 aa).

An Obg domain is found at 4–162 (SNFVDYVKIY…MTVILELKLL (159 aa)). A disordered region spans residues 18 to 45 (KGGRGSTHMRREKYTPNGGPDGGDGGRG). Gly residues predominate over residues 36 to 45 (GPDGGDGGRG). Positions 163–329 (ADVGLVGFPN…LKDILWTELN (167 aa)) constitute an OBG-type G domain. Residues 169–176 (GFPNAGKS), 194–198 (FTTLE), 216–219 (DIPG), 283–286 (TKSD), and 310–312 (SSV) contribute to the GTP site. Positions 176 and 196 each coordinate Mg(2+). The interval 351–386 (ELKDMGEDEELDYEYEDDGDEDDLDYEYEEEDWEDK) is disordered. Positions 356 to 386 (GEDEELDYEYEDDGDEDDLDYEYEEEDWEDK) are enriched in acidic residues.

This sequence belongs to the TRAFAC class OBG-HflX-like GTPase superfamily. OBG GTPase family. In terms of assembly, monomer. It depends on Mg(2+) as a cofactor.

It is found in the cytoplasm. An essential GTPase which binds GTP, GDP and possibly (p)ppGpp with moderate affinity, with high nucleotide exchange rates and a fairly low GTP hydrolysis rate. Plays a role in control of the cell cycle, stress response, ribosome biogenesis and in those bacteria that undergo differentiation, in morphogenesis control. This is GTPase Obg from Bacteroides fragilis (strain YCH46).